Here is a 113-residue protein sequence, read N- to C-terminus: Ribosome-binding factor A (113 aa).

The protein belongs to the RbfA family. Monomer. Binds 30S ribosomal subunits, but not 50S ribosomal subunits or 70S ribosomes.

Its subcellular location is the cytoplasm. Functionally, one of several proteins that assist in the late maturation steps of the functional core of the 30S ribosomal subunit. Associates with free 30S ribosomal subunits (but not with 30S subunits that are part of 70S ribosomes or polysomes). Required for efficient processing of 16S rRNA. May interact with the 5'-terminal helix region of 16S rRNA. The protein is Ribosome-binding factor A of Mycoplasmopsis agalactiae (strain NCTC 10123 / CIP 59.7 / PG2) (Mycoplasma agalactiae).